Reading from the N-terminus, the 77-residue chain is Acyl carrier protein (77 aa).

The 76-residue stretch at Met-1 to Asn-76 folds into the Carrier domain. Ser-36 bears the O-(pantetheine 4'-phosphoryl)serine mark.

This sequence belongs to the acyl carrier protein (ACP) family. In terms of processing, 4'-phosphopantetheine is transferred from CoA to a specific serine of apo-ACP by AcpS. This modification is essential for activity because fatty acids are bound in thioester linkage to the sulfhydryl of the prosthetic group.

It is found in the cytoplasm. It functions in the pathway lipid metabolism; fatty acid biosynthesis. Carrier of the growing fatty acid chain in fatty acid biosynthesis. The chain is Acyl carrier protein from Actinobacillus pleuropneumoniae serotype 5b (strain L20).